The primary structure comprises 224 residues: dTTP/UTP pyrophosphatase (224 aa).

Asp-77 acts as the Proton acceptor in catalysis.

It belongs to the Maf family. YhdE subfamily. A divalent metal cation is required as a cofactor.

It localises to the cytoplasm. The enzyme catalyses dTTP + H2O = dTMP + diphosphate + H(+). It carries out the reaction UTP + H2O = UMP + diphosphate + H(+). In terms of biological role, nucleoside triphosphate pyrophosphatase that hydrolyzes dTTP and UTP. May have a dual role in cell division arrest and in preventing the incorporation of modified nucleotides into cellular nucleic acids. This Dehalococcoides mccartyi (strain ATCC BAA-2266 / KCTC 15142 / 195) (Dehalococcoides ethenogenes (strain 195)) protein is dTTP/UTP pyrophosphatase.